The sequence spans 89 residues: uncharacterized protein (89 aa).

The disordered stretch occupies residues 31-89; the sequence is TPQPLEPHEHPKPMEPNEFDPKPDDPPRNPDPSPFPNEVPKPKPSDFPIPDELYPQPIV. Residues 36-58 show a composition bias toward basic and acidic residues; the sequence is EPHEHPKPMEPNEFDPKPDDPPR. Over residues 59 to 69 the composition is skewed to pro residues; sequence NPDPSPFPNEV.

This is an uncharacterized protein from Dictyostelium discoideum (Social amoeba).